The sequence spans 82 residues: ATP synthase subunit 9, mitochondrial (82 aa).

2 helical membrane passes run 8–28 and 45–67; these read IGAGAATIASAGAAIGIGNVF and SFGYAILGFALTEAIASFAPMMA.

This sequence belongs to the ATPase C chain family. F-type ATPases have 2 components, CF(1) - the catalytic core - and CF(0) - the membrane proton channel. CF(1) has five subunits: alpha(3), beta(3), gamma(1), delta(1), epsilon(1). CF(0) has three main subunits: a, b and c.

Its subcellular location is the mitochondrion membrane. This protein is one of the chains of the nonenzymatic membrane component (F0) of mitochondrial ATPase. This chain is ATP synthase subunit 9, mitochondrial (ATP9), found in Malus domestica (Apple).